Reading from the N-terminus, the 3184-residue chain is WD repeat- and FYVE domain-containing protein 4 (3184 aa).

The span at 1-18 shows a compositional bias: basic and acidic residues; that stretch reads MEAEDLSKAEDRNEDPGS. Disordered stretches follow at residues 1 to 39, 944 to 993, 1837 to 1869, and 2309 to 2335; these read MEAE…QSSS, SHTH…QDST, VGAE…KAHP, and ALSS…NQDE. Positions 981-993 are enriched in polar residues; it reads QAPQPLGESQDST. The segment covering 2314 to 2324 has biased composition (basic and acidic residues); sequence RHKESQDKNDH. Residues 2385–2510 enclose the BEACH-type PH domain; the sequence is LDKEKVTQKF…DRSKAFKSFC (126 aa). One can recognise a BEACH domain in the interval 2527 to 2821; that stretch reads SLRRYPGSDR…QLFTKPHPAR (295 aa). WD repeat units follow at residues 2863–2922, 2923–2972, 2973–3014, 3015–3057, 3058–3141, and 3142–3184; these read MYLF…YGSD, KVLM…PRGL, RLRQ…LDHL, THVT…GQPL, ASIT…ELDV, and SIAL…SADG. The segment at 3107 to 3128 is disordered; that stretch reads SVPGRPAGEEPPAQPPSPRGHK.

In terms of assembly, interacts with HSP90AB1.

It localises to the early endosome. The protein resides in the endoplasmic reticulum. Functionally, plays a critical role in the regulation of cDC1-mediated cross-presentation of viral and tumor antigens in dendritic cells. Mechanistically, acts near the plasma membrane and interacts with endosomal membranes to promote endosomal-to-cytosol antigen trafficking. Also plays a role in B-cell survival through regulation of autophagy. This Homo sapiens (Human) protein is WD repeat- and FYVE domain-containing protein 4 (WDFY4).